The following is a 484-amino-acid chain: UDP-N-acetylmuramoyl-L-alanyl-D-glutamate--L-lysine ligase (484 aa).

S43 is a UDP-N-acetyl-alpha-D-muramoyl-L-alanyl-D-glutamate binding site. 119-125 (GTKGKTT) is an ATP binding site. Residues 161 to 162 (TT), S188, and R196 each bind UDP-N-acetyl-alpha-D-muramoyl-L-alanyl-D-glutamate. K230 carries the N6-carboxylysine modification. The L-lysine recognition motif signature appears at 405–408 (DDPN).

This sequence belongs to the MurCDEF family. MurE subfamily. Carboxylation is probably crucial for Mg(2+) binding and, consequently, for the gamma-phosphate positioning of ATP.

Its subcellular location is the cytoplasm. It catalyses the reaction UDP-N-acetyl-alpha-D-muramoyl-L-alanyl-D-glutamate + L-lysine + ATP = UDP-N-acetyl-alpha-D-muramoyl-L-alanyl-gamma-D-glutamyl-L-lysine + ADP + phosphate + H(+). It functions in the pathway cell wall biogenesis; peptidoglycan biosynthesis. In terms of biological role, catalyzes the addition of L-lysine to the nucleotide precursor UDP-N-acetylmuramoyl-L-alanyl-D-glutamate (UMAG) in the biosynthesis of bacterial cell-wall peptidoglycan. The polypeptide is UDP-N-acetylmuramoyl-L-alanyl-D-glutamate--L-lysine ligase (Streptococcus agalactiae serotype Ia (strain ATCC 27591 / A909 / CDC SS700)).